The following is an 822-amino-acid chain: Glycerol-3-phosphate acyltransferase (822 aa).

An HXXXXD motif motif is present at residues 306–311 (CHRSHM). Residues 803 to 822 (ASSSAEMEAESQAVEETTQE) form a disordered region.

It belongs to the GPAT/DAPAT family.

The protein localises to the cell inner membrane. The enzyme catalyses sn-glycerol 3-phosphate + an acyl-CoA = a 1-acyl-sn-glycero-3-phosphate + CoA. It participates in phospholipid metabolism; CDP-diacylglycerol biosynthesis; CDP-diacylglycerol from sn-glycerol 3-phosphate: step 1/3. The polypeptide is Glycerol-3-phosphate acyltransferase (Pectobacterium carotovorum subsp. carotovorum (strain PC1)).